The chain runs to 134 residues: Large ribosomal subunit protein uL16c (134 aa).

The span at 1-17 (MLSPKRTRFRKQHRGRM) shows a compositional bias: basic residues. The disordered stretch occupies residues 1–21 (MLSPKRTRFRKQHRGRMKGIS).

This sequence belongs to the universal ribosomal protein uL16 family. In terms of assembly, part of the 50S ribosomal subunit.

The protein resides in the plastid. It is found in the chloroplast. The protein is Large ribosomal subunit protein uL16c of Solanum bulbocastanum (Wild potato).